The chain runs to 227 residues: 2,3-bisphosphoglycerate-dependent phosphoglycerate mutase (227 aa).

Substrate is bound by residues 7 to 14, 20 to 21, R59, 86 to 89, K97, 113 to 114, and 182 to 183; these read RHGQSEWN, TG, ERHY, RR, and GN. The active-site Tele-phosphohistidine intermediate is the H8. E86 (proton donor/acceptor) is an active-site residue.

The protein belongs to the phosphoglycerate mutase family. BPG-dependent PGAM subfamily. As to quaternary structure, homodimer.

The catalysed reaction is (2R)-2-phosphoglycerate = (2R)-3-phosphoglycerate. Its pathway is carbohydrate degradation; glycolysis; pyruvate from D-glyceraldehyde 3-phosphate: step 3/5. Its function is as follows. Catalyzes the interconversion of 2-phosphoglycerate and 3-phosphoglycerate. This Neisseria gonorrhoeae (strain ATCC 700825 / FA 1090) protein is 2,3-bisphosphoglycerate-dependent phosphoglycerate mutase.